Here is a 445-residue protein sequence, read N- to C-terminus: 3-phosphoshikimate 1-carboxyvinyltransferase (445 aa).

Residues K28, S29, and R33 each coordinate 3-phosphoshikimate. K28 contributes to the phosphoenolpyruvate binding site. Residues G101 and R129 each contribute to the phosphoenolpyruvate site. 3-phosphoshikimate contacts are provided by S175, Q177, D328, and K355. Position 177 (Q177) interacts with phosphoenolpyruvate. The active-site Proton acceptor is D328. Residues R359 and R402 each contribute to the phosphoenolpyruvate site.

It belongs to the EPSP synthase family. In terms of assembly, monomer.

It localises to the cytoplasm. The catalysed reaction is 3-phosphoshikimate + phosphoenolpyruvate = 5-O-(1-carboxyvinyl)-3-phosphoshikimate + phosphate. The protein operates within metabolic intermediate biosynthesis; chorismate biosynthesis; chorismate from D-erythrose 4-phosphate and phosphoenolpyruvate: step 6/7. Catalyzes the transfer of the enolpyruvyl moiety of phosphoenolpyruvate (PEP) to the 5-hydroxyl of shikimate-3-phosphate (S3P) to produce enolpyruvyl shikimate-3-phosphate and inorganic phosphate. In Rhodopseudomonas palustris (strain HaA2), this protein is 3-phosphoshikimate 1-carboxyvinyltransferase.